The primary structure comprises 426 residues: Enolase (426 aa).

Gln-163 contributes to the (2R)-2-phosphoglycerate binding site. The active-site Proton donor is Glu-205. Mg(2+)-binding residues include Asp-242, Glu-286, and Asp-313. Residues Lys-338, Arg-367, Ser-368, and Lys-389 each coordinate (2R)-2-phosphoglycerate. Lys-338 serves as the catalytic Proton acceptor.

Belongs to the enolase family. Requires Mg(2+) as cofactor.

It localises to the cytoplasm. The protein resides in the secreted. The protein localises to the cell surface. It carries out the reaction (2R)-2-phosphoglycerate = phosphoenolpyruvate + H2O. It participates in carbohydrate degradation; glycolysis; pyruvate from D-glyceraldehyde 3-phosphate: step 4/5. In terms of biological role, catalyzes the reversible conversion of 2-phosphoglycerate (2-PG) into phosphoenolpyruvate (PEP). It is essential for the degradation of carbohydrates via glycolysis. This Helicobacter pylori (strain P12) protein is Enolase.